An 881-amino-acid chain; its full sequence is DNA mismatch repair protein MutS (881 aa).

632–639 serves as a coordination point for ATP; sequence GPNMGGKS.

The protein belongs to the DNA mismatch repair MutS family.

This protein is involved in the repair of mismatches in DNA. It is possible that it carries out the mismatch recognition step. This protein has a weak ATPase activity. This is DNA mismatch repair protein MutS from Chelativorans sp. (strain BNC1).